A 261-amino-acid chain; its full sequence is Glutamate 5-kinase (261 aa).

Residue K7 participates in ATP binding. Residues S46, D131, and N147 each coordinate substrate. Residues 167-168 (SD) and 209-215 (TGGIVTK) each bind ATP.

It belongs to the glutamate 5-kinase family.

It is found in the cytoplasm. It carries out the reaction L-glutamate + ATP = L-glutamyl 5-phosphate + ADP. It functions in the pathway amino-acid biosynthesis; L-proline biosynthesis; L-glutamate 5-semialdehyde from L-glutamate: step 1/2. In terms of biological role, catalyzes the transfer of a phosphate group to glutamate to form L-glutamate 5-phosphate. This is Glutamate 5-kinase from Wolinella succinogenes (strain ATCC 29543 / DSM 1740 / CCUG 13145 / JCM 31913 / LMG 7466 / NCTC 11488 / FDC 602W) (Vibrio succinogenes).